The sequence spans 656 residues: CoB--CoM heterodisulfide reductase iron-sulfur subunit A 2 (656 aa).

152-175 (GGGVSGIQAALDLADMGFEVILVE) contributes to the FAD binding site. 4Fe-4S ferredoxin-type domains lie at 238–269 (KKPRYVDEDACTGCGACAEVCPIEVPNEFDEG), 286–315 (SVFTIDEEHCIRCGLCEEVCDADAIDFDQE), 577–606 (IVSEVDEEICGGCGTCVELCPYGAIELVEK), and 610–639 (LVAEVTAALCKGCGTCAAACPSGAMEQNHF). [4Fe-4S] cluster is bound by residues cysteine 248, cysteine 251, cysteine 254, cysteine 258, cysteine 295, cysteine 298, cysteine 301, cysteine 305, cysteine 586, cysteine 589, cysteine 592, cysteine 596, cysteine 619, cysteine 622, cysteine 625, and cysteine 629.

Belongs to the HdrA family. In terms of assembly, the ferredoxin:CoB-CoM heterodisulfide reductase is composed of three subunits; HdrA, HdrB and HdrC. It depends on [4Fe-4S] cluster as a cofactor. FAD is required as a cofactor.

It participates in cofactor metabolism; coenzyme M-coenzyme B heterodisulfide reduction; coenzyme B and coenzyme M from coenzyme M-coenzyme B heterodisulfide: step 1/1. Functionally, part of a complex that catalyzes the reversible reduction of CoM-S-S-CoB to the thiol-coenzymes H-S-CoM (coenzyme M) and H-S-CoB (coenzyme B). The polypeptide is CoB--CoM heterodisulfide reductase iron-sulfur subunit A 2 (hdrA2) (Methanopyrus kandleri (strain AV19 / DSM 6324 / JCM 9639 / NBRC 100938)).